We begin with the raw amino-acid sequence, 215 residues long: Orotate phosphoribosyltransferase (215 aa).

Lys-26 contributes to the 5-phospho-alpha-D-ribose 1-diphosphate binding site. Phe-34–Phe-35 lines the orotate pocket. Residues Tyr-72 to Lys-73, Arg-99, Lys-100, Lys-103, His-105, and Asp-124 to Ala-132 each bind 5-phospho-alpha-D-ribose 1-diphosphate. Residues Thr-128 and Arg-156 each contribute to the orotate site.

Belongs to the purine/pyrimidine phosphoribosyltransferase family. PyrE subfamily. In terms of assembly, homodimer. Mg(2+) is required as a cofactor.

The catalysed reaction is orotidine 5'-phosphate + diphosphate = orotate + 5-phospho-alpha-D-ribose 1-diphosphate. The protein operates within pyrimidine metabolism; UMP biosynthesis via de novo pathway; UMP from orotate: step 1/2. In terms of biological role, catalyzes the transfer of a ribosyl phosphate group from 5-phosphoribose 1-diphosphate to orotate, leading to the formation of orotidine monophosphate (OMP). The sequence is that of Orotate phosphoribosyltransferase from Stutzerimonas stutzeri (strain A1501) (Pseudomonas stutzeri).